Consider the following 311-residue polypeptide: Homeobox protein CDX-2 (311 aa).

Ser60 is modified (phosphoserine). Positions 111 to 151 (EYHAHHHPHHHPHHPAASPSCASGLLQTLNLGPPGPAATAA) are disordered. Residues 114-124 (AHHHPHHHPHH) show a composition bias toward basic residues. Residues 185–215 (KDKYRVVYTDHQRLELEKEFHFSRYITIRRK) are interaction with DNA. The homeobox DNA-binding region spans 185–244 (KDKYRVVYTDHQRLELEKEFHFSRYITIRRKSELAATLGLSERQVKIWFQNRRAKERKIK). Positions 227–241 (RQVKIWFQNRRAKER) are interaction with 5-mCpG DNA. Positions 239-311 (KERKIKKKQQ…GGVLNSTVTQ (73 aa)) are disordered. Over residues 248 to 257 (QQQQQQQQQQ) the composition is skewed to low complexity. Pro residues predominate over residues 258–268 (PPQPPPQPSQP). At Ser281 the chain carries Phosphoserine; by CDK2. The 4S motif; modulates transactivation activity and protein stability signature appears at 281–293 (SPVTSLQGSVPGS). Over residues 285–298 (SLQGSVPGSVPGVL) the composition is skewed to low complexity.

Belongs to the Caudal homeobox family. In terms of assembly, can bind DNA as a monomer or homodimer. Post-translationally, ubiquitinated, leading to its degradation by the proteasome. Phosphorylation at Ser-60 reduces transactivation capacity. Phosphorylation at Ser-281 reduces transactivation capacity and increases ubiquitin-dependent proteasome degradation. In terms of tissue distribution, in the intestine, detected in ileum and proximal and distal colon (at protein level). In adult small intestine, predominantly localized in crypt and lower villus cells of the epithelium (at protein level). Expressed in the intestine but not detected in other tissues including stomach, liver, kidney, spleen, brain, heart, lung, pancreas, skeletal muscle and testis. Expressed specifically in gut epithelium where it is not restricted to a particular cell lineage. Abundant expression is seen in the proximal colon with slightly lower levels in distal colon. Expression in the proximal colon is not restricted either to a particular cell lineage or stage of differentiation while in the distal colon it is more abundant in the differentiated cells towards the top of the crypt.

The protein localises to the nucleus. Its function is as follows. Transcription factor which regulates the transcription of multiple genes expressed in the intestinal epithelium. Binds to the promoter of the intestinal sucrase-isomaltase SI and activates SI transcription. Binds to the DNA sequence 5'-ATAAAAACTTAT-3' in the promoter region of VDR and activates VDR transcription. Binds to and activates transcription of LPH. Activates transcription of CLDN2 and intestinal mucin MUC2. Binds to the 5'-AATTTTTTACAACACCT-3' DNA sequence in the promoter region of CA1 and activates CA1 transcription. Important in broad range of functions from early differentiation to maintenance of the intestinal epithelial lining of both the small and large intestine. Binds preferentially to methylated DNA. The chain is Homeobox protein CDX-2 (Cdx2) from Mus musculus (Mouse).